The chain runs to 219 residues: Cytidylate kinase (219 aa).

Gly-11–Thr-19 serves as a coordination point for ATP.

The protein belongs to the cytidylate kinase family. Type 1 subfamily.

It is found in the cytoplasm. It catalyses the reaction CMP + ATP = CDP + ADP. The catalysed reaction is dCMP + ATP = dCDP + ADP. This chain is Cytidylate kinase, found in Oleidesulfovibrio alaskensis (strain ATCC BAA-1058 / DSM 17464 / G20) (Desulfovibrio alaskensis).